Reading from the N-terminus, the 499-residue chain is Cobyric acid synthase (499 aa).

The GATase cobBQ-type domain maps to 266–449 (RLEIAVVRLP…LHGLFDNHLW (184 aa)). The active-site Nucleophile is the Cys344. His441 is a catalytic residue.

The protein belongs to the CobB/CobQ family. CobQ subfamily.

It participates in cofactor biosynthesis; adenosylcobalamin biosynthesis. Its function is as follows. Catalyzes amidations at positions B, D, E, and G on adenosylcobyrinic A,C-diamide. NH(2) groups are provided by glutamine, and one molecule of ATP is hydrogenolyzed for each amidation. The polypeptide is Cobyric acid synthase (Synechococcus sp. (strain JA-2-3B'a(2-13)) (Cyanobacteria bacterium Yellowstone B-Prime)).